A 176-amino-acid chain; its full sequence is Translation initiation factor IF-3 (176 aa).

Belongs to the IF-3 family. Monomer.

The protein resides in the cytoplasm. IF-3 binds to the 30S ribosomal subunit and shifts the equilibrium between 70S ribosomes and their 50S and 30S subunits in favor of the free subunits, thus enhancing the availability of 30S subunits on which protein synthesis initiation begins. The protein is Translation initiation factor IF-3 of Nitratidesulfovibrio vulgaris (strain DSM 19637 / Miyazaki F) (Desulfovibrio vulgaris).